Reading from the N-terminus, the 334-residue chain is GTPase Obg (334 aa).

Positions 1-159 constitute an Obg domain; it reads MRFVDEVVIK…KEVRLELNLL (159 aa). Residues 160 to 331 form the OBG-type G domain; sequence ADVALLGLPN…LAKKLNEFLQ (172 aa). GTP is bound by residues 166–173, 191–195, 212–215, 282–285, and 312–314; these read GLPNAGKS, FTTMY, DIPG, NKID, and SAA. Mg(2+) contacts are provided by Ser-173 and Thr-193.

This sequence belongs to the TRAFAC class OBG-HflX-like GTPase superfamily. OBG GTPase family. As to quaternary structure, monomer. Mg(2+) is required as a cofactor.

It is found in the cytoplasm. An essential GTPase which binds GTP, GDP and possibly (p)ppGpp with moderate affinity, with high nucleotide exchange rates and a fairly low GTP hydrolysis rate. Plays a role in control of the cell cycle, stress response, ribosome biogenesis and in those bacteria that undergo differentiation, in morphogenesis control. The chain is GTPase Obg from Francisella tularensis subsp. tularensis (strain WY96-3418).